The following is a 107-amino-acid chain: Universal stress protein B homolog (107 aa).

2 consecutive transmembrane segments (helical) span residues 6 to 26 (IILF…LTAL) and 86 to 106 (VREL…AAFL).

This sequence belongs to the universal stress protein B family.

Its subcellular location is the cell inner membrane. In Vibrio vulnificus (strain CMCP6), this protein is Universal stress protein B homolog.